The sequence spans 329 residues: Ribosomal RNA small subunit methyltransferase H (329 aa).

S-adenosyl-L-methionine is bound by residues Gly39 to Tyr41, Asp56, Phe85, Asp106, and Gln113. The interval Ser289–Ala308 is disordered.

This sequence belongs to the methyltransferase superfamily. RsmH family.

The protein localises to the cytoplasm. It carries out the reaction cytidine(1402) in 16S rRNA + S-adenosyl-L-methionine = N(4)-methylcytidine(1402) in 16S rRNA + S-adenosyl-L-homocysteine + H(+). In terms of biological role, specifically methylates the N4 position of cytidine in position 1402 (C1402) of 16S rRNA. The chain is Ribosomal RNA small subunit methyltransferase H from Novosphingobium aromaticivorans (strain ATCC 700278 / DSM 12444 / CCUG 56034 / CIP 105152 / NBRC 16084 / F199).